A 512-amino-acid polypeptide reads, in one-letter code: Mucin-13 (512 aa).

A signal peptide spans 1-18; the sequence is MKAIIHLTLLALLSVNTA. Residues 19 to 421 are Extracellular-facing; the sequence is TNQGNSADAV…GLDCKDKFQL (403 aa). The span at 22–38 shows a compositional bias: polar residues; it reads GNSADAVTTTETATSGP. 2 disordered regions span residues 22–67 and 133–176; these read GNSA…PTAT and MVPS…PSNP. The segment covering 53 to 67 has biased composition (low complexity); the sequence is TASTTANTPSFPTAT. Over residues 135 to 176 the composition is skewed to polar residues; that stretch reads PSETQSNNEMSPTTEDNQSSGPPTGTALLETSTLNSTGPSNP. 2 N-linked (GlcNAc...) asparagine glycosylation sites follow: Asn-151 and Asn-169. The region spanning 173-211 is the EGF-like 1 domain; sequence PSNPCQDDPCADNSLCVKLHNTSFCLCLEGYYYNSSTCK. Disulfide bonds link Cys-177–Cys-188, Cys-182–Cys-197, and Cys-199–Cys-210. N-linked (GlcNAc...) asparagine glycans are attached at residues Asn-193, Asn-206, Asn-284, and Asn-332. Positions 212–336 constitute an SEA domain; it reads KGKVFPGKIS…DYYGCNQTAD (125 aa). 2 EGF-like domains span residues 322–361 and 363–404; these read LTLR…PFCV and SSLK…GNCQ. Intrachain disulfides connect Cys-326–Cys-338, Cys-331–Cys-344, Cys-346–Cys-360, Cys-367–Cys-378, Cys-371–Cys-389, and Cys-391–Cys-403. The helical transmembrane segment at 422–442 threads the bilayer; sequence ILTIVGTIAGIVILSMIIALI. Residues 443 to 512 are Cytoplasmic-facing; that stretch reads VTARSNNKTK…RHSSMPRPDY (70 aa). Residues 493-505 are compositionally biased toward polar residues; it reads RDSQMQNPYSRHS. The interval 493-512 is disordered; that stretch reads RDSQMQNPYSRHSSMPRPDY.

In terms of assembly, homodimer of beta subunits. In terms of processing, cleaved into two subunits, alpha and beta, probably between the first EGF domain and the SEA domain. Beta subunit contains the cytoplasmic tail and alpha subunit the extracellular tail. The homooligomerization into dimers is dependent on intrachain disulfide bonds. Highly N-glycosylated. In terms of tissue distribution, highly expressed in epithelial tissues, particularly those of the gastrointestinal and respiratory tracts, such as large intestine and trachea, followed by kidney, small intestine, appendix and stomach.

Its subcellular location is the cell membrane. It localises to the apical cell membrane. The protein localises to the secreted. Epithelial and hemopoietic transmembrane mucin that may play a role in cell signaling. The protein is Mucin-13 (MUC13) of Homo sapiens (Human).